The sequence spans 421 residues: D-amino acid dehydrogenase (421 aa).

Val3–Tyr17 provides a ligand contact to FAD.

The protein belongs to the DadA oxidoreductase family. FAD serves as cofactor.

The catalysed reaction is a D-alpha-amino acid + A + H2O = a 2-oxocarboxylate + AH2 + NH4(+). Its pathway is amino-acid degradation; D-alanine degradation; NH(3) and pyruvate from D-alanine: step 1/1. Oxidative deamination of D-amino acids. This is D-amino acid dehydrogenase from Acinetobacter baumannii (strain SDF).